The following is a 235-amino-acid chain: Pyridoxine 5'-phosphate synthase (235 aa).

Asparagine 6 provides a ligand contact to 3-amino-2-oxopropyl phosphate. Residue 8-9 participates in 1-deoxy-D-xylulose 5-phosphate binding; the sequence is DH. Position 17 (arginine 17) interacts with 3-amino-2-oxopropyl phosphate. Histidine 42 acts as the Proton acceptor in catalysis. 1-deoxy-D-xylulose 5-phosphate contacts are provided by arginine 44 and histidine 49. Residue glutamate 69 is the Proton acceptor of the active site. Threonine 99 lines the 1-deoxy-D-xylulose 5-phosphate pocket. Histidine 189 serves as the catalytic Proton donor. Residues glycine 190 and 211 to 212 contribute to the 3-amino-2-oxopropyl phosphate site; that span reads GH.

It belongs to the PNP synthase family. As to quaternary structure, homooctamer; tetramer of dimers.

The protein resides in the cytoplasm. The catalysed reaction is 3-amino-2-oxopropyl phosphate + 1-deoxy-D-xylulose 5-phosphate = pyridoxine 5'-phosphate + phosphate + 2 H2O + H(+). It participates in cofactor biosynthesis; pyridoxine 5'-phosphate biosynthesis; pyridoxine 5'-phosphate from D-erythrose 4-phosphate: step 5/5. Functionally, catalyzes the complicated ring closure reaction between the two acyclic compounds 1-deoxy-D-xylulose-5-phosphate (DXP) and 3-amino-2-oxopropyl phosphate (1-amino-acetone-3-phosphate or AAP) to form pyridoxine 5'-phosphate (PNP) and inorganic phosphate. The polypeptide is Pyridoxine 5'-phosphate synthase (Chlorobium chlorochromatii (strain CaD3)).